Here is a 120-residue protein sequence, read N- to C-terminus: UPF0145 protein Bcenmc03_5217 (120 aa).

It belongs to the UPF0145 family.

In Burkholderia orbicola (strain MC0-3), this protein is UPF0145 protein Bcenmc03_5217.